A 278-amino-acid chain; its full sequence is Shikimate dehydrogenase (NADP(+)) (278 aa).

Shikimate-binding positions include 19–21 and threonine 66; that span reads SFS. Lysine 70 serves as the catalytic Proton acceptor. Shikimate contacts are provided by asparagine 91 and aspartate 106. NADP(+) contacts are provided by residues 130 to 134 and leucine 222; that span reads GSGGA. Shikimate is bound at residue tyrosine 224. Residue glycine 245 participates in NADP(+) binding.

Belongs to the shikimate dehydrogenase family. Homodimer.

The catalysed reaction is shikimate + NADP(+) = 3-dehydroshikimate + NADPH + H(+). Its pathway is metabolic intermediate biosynthesis; chorismate biosynthesis; chorismate from D-erythrose 4-phosphate and phosphoenolpyruvate: step 4/7. Functionally, involved in the biosynthesis of the chorismate, which leads to the biosynthesis of aromatic amino acids. Catalyzes the reversible NADPH linked reduction of 3-dehydroshikimate (DHSA) to yield shikimate (SA). The sequence is that of Shikimate dehydrogenase (NADP(+)) from Methanococcus maripaludis (strain DSM 14266 / JCM 13030 / NBRC 101832 / S2 / LL).